The sequence spans 380 residues: Lipid-A-disaccharide synthase (380 aa).

This sequence belongs to the LpxB family.

The enzyme catalyses a lipid X + a UDP-2-N,3-O-bis[(3R)-3-hydroxyacyl]-alpha-D-glucosamine = a lipid A disaccharide + UDP + H(+). It participates in bacterial outer membrane biogenesis; LPS lipid A biosynthesis. Condensation of UDP-2,3-diacylglucosamine and 2,3-diacylglucosamine-1-phosphate to form lipid A disaccharide, a precursor of lipid A, a phosphorylated glycolipid that anchors the lipopolysaccharide to the outer membrane of the cell. This is Lipid-A-disaccharide synthase from Francisella philomiragia subsp. philomiragia (strain ATCC 25017 / CCUG 19701 / FSC 153 / O#319-036).